A 180-amino-acid polypeptide reads, in one-letter code: Putative 5'(3')-deoxyribonucleotidase (180 aa).

Asp9 functions as the Nucleophile in the catalytic mechanism. Residues Asp9, Asp11, and Asp135 each contribute to the Mg(2+) site. The Proton donor role is filled by Asp11.

This sequence belongs to the 5'(3')-deoxyribonucleotidase family. Mg(2+) serves as cofactor.

In terms of biological role, dephosphorylates the 5' and 2'(3')-phosphates of deoxyribonucleotides. This chain is Putative 5'(3')-deoxyribonucleotidase, found in Staphylococcus aureus (strain MSSA476).